A 33-amino-acid polypeptide reads, in one-letter code: Dermaseptin-H6 (33 aa).

At Leu33 the chain carries Leucine amide.

In terms of tissue distribution, expressed by the skin glands.

It is found in the secreted. Its function is as follows. Has antimicrobial activity. This Pithecopus hypochondrialis (Orange-legged leaf frog) protein is Dermaseptin-H6.